Reading from the N-terminus, the 632-residue chain is tRNA-guanine(15) transglycosylase (632 aa).

The Nucleophile role is filled by Asp86. Substrate contacts are provided by Asp121 and Gly186. The region spanning 553-628 (NLRVFVKNES…IAVKIHEGRD (76 aa)) is the PUA domain.

It belongs to the archaeosine tRNA-ribosyltransferase family. Zn(2+) is required as a cofactor.

The enzyme catalyses guanosine(15) in tRNA + 7-cyano-7-deazaguanine = 7-cyano-7-carbaguanosine(15) in tRNA + guanine. It functions in the pathway tRNA modification; archaeosine-tRNA biosynthesis. Exchanges the guanine residue with 7-cyano-7-deazaguanine (preQ0) at position 15 in the dihydrouridine loop (D-loop) of archaeal tRNAs. The chain is tRNA-guanine(15) transglycosylase from Thermoplasma volcanium (strain ATCC 51530 / DSM 4299 / JCM 9571 / NBRC 15438 / GSS1).